A 595-amino-acid polypeptide reads, in one-letter code: Putative lipase atg15 (595 aa).

The Cytoplasmic segment spans residues 1 to 20; that stretch reads MKGLRGHNKKSFWGNTRLSD. A helical; Signal-anchor for type II membrane protein membrane pass occupies residues 21-41; that stretch reads LLWPVTLLPGLISAYQPVYLG. At 42 to 595 the chain is on the lumenal side; sequence SRQSSPFLPP…TTTGKHLGRF (554 aa). N-linked (GlcNAc...) asparagine glycans are attached at residues asparagine 164, asparagine 199, asparagine 221, asparagine 279, and asparagine 303. Serine 319 functions as the Charge relay system in the catalytic mechanism. A glycan (N-linked (GlcNAc...) asparagine) is linked at asparagine 465.

Belongs to the AB hydrolase superfamily. Lipase family. Binds to both phosphatidylinositol (PI) and phosphatidylinositol 3,5-bisphosphate (PIP2).

The protein resides in the endosome. The protein localises to the multivesicular body membrane. Its subcellular location is the prevacuolar compartment membrane. The catalysed reaction is a triacylglycerol + H2O = a diacylglycerol + a fatty acid + H(+). Its function is as follows. Lipase which is essential for lysis of subvacuolar cytoplasm to vacuole targeted bodies and intravacuolar autophagic bodies. Involved in the lysis of intravacuolar multivesicular body (MVB) vesicles. The intravacuolar membrane disintegration by atg15 is critical to life span extension. The polypeptide is Putative lipase atg15 (atg15) (Aspergillus niger (strain ATCC MYA-4892 / CBS 513.88 / FGSC A1513)).